A 585-amino-acid chain; its full sequence is Putative ABC transporter ATP-binding protein MG187 (585 aa).

One can recognise an ABC transporter domain in the interval I8–L468. G40–T47 serves as a coordination point for ATP.

The protein belongs to the ABC transporter superfamily.

This Mycoplasma genitalium (strain ATCC 33530 / DSM 19775 / NCTC 10195 / G37) (Mycoplasmoides genitalium) protein is Putative ABC transporter ATP-binding protein MG187.